The chain runs to 153 residues: uncharacterized protein (153 aa).

This is an uncharacterized protein from Ureaplasma parvum serovar 3 (strain ATCC 700970).